Reading from the N-terminus, the 614-residue chain is BTB/POZ domain-containing protein At5g48800 (614 aa).

The BTB domain maps to 43–111 (SDITIEVNGG…CYGINFEITS (69 aa)). Residues 219-484 (DWWIEDLSVL…VQVLYFEQLK (266 aa)) enclose the NPH3 domain. At Y425 the chain carries Phosphotyrosine. Disordered regions lie at residues 492–525 (SYSD…KDNY) and 583–614 (GHSS…ASTD). Polar residues predominate over residues 507-521 (SWRINSGALSATMSP). Positions 522-562 (KDNYASLRRENRELKLELARLRMRLNDLEKEHICMKRDMQR) form a coiled coil. The span at 583–597 (GHSSSRGSSSPSKQS) shows a compositional bias: low complexity.

Belongs to the NPH3 family.

It participates in protein modification; protein ubiquitination. May act as a substrate-specific adapter of an E3 ubiquitin-protein ligase complex (CUL3-RBX1-BTB) which mediates the ubiquitination and subsequent proteasomal degradation of target proteins. The polypeptide is BTB/POZ domain-containing protein At5g48800 (Arabidopsis thaliana (Mouse-ear cress)).